Here is a 141-residue protein sequence, read N- to C-terminus: Large ribosomal subunit protein bL17 (141 aa).

The protein belongs to the bacterial ribosomal protein bL17 family. As to quaternary structure, part of the 50S ribosomal subunit. Contacts protein L32.

The protein is Large ribosomal subunit protein bL17 of Maridesulfovibrio salexigens (strain ATCC 14822 / DSM 2638 / NCIMB 8403 / VKM B-1763) (Desulfovibrio salexigens).